Here is a 135-residue protein sequence, read N- to C-terminus: Large ribosomal subunit protein bL21 (135 aa).

Positions 114 to 135 (EAEKETPVLDETPAEEVETAAE) are disordered. Positions 125 to 135 (TPAEEVETAAE) are enriched in acidic residues.

It belongs to the bacterial ribosomal protein bL21 family. Part of the 50S ribosomal subunit. Contacts protein L20.

In terms of biological role, this protein binds to 23S rRNA in the presence of protein L20. The protein is Large ribosomal subunit protein bL21 of Nostoc punctiforme (strain ATCC 29133 / PCC 73102).